Consider the following 144-residue polypeptide: Urease subunit beta (144 aa).

This sequence belongs to the urease beta subunit family. Heterotrimer of UreA (gamma), UreB (beta) and UreC (alpha) subunits. Three heterotrimers associate to form the active enzyme.

It localises to the cytoplasm. It catalyses the reaction urea + 2 H2O + H(+) = hydrogencarbonate + 2 NH4(+). Its pathway is nitrogen metabolism; urea degradation; CO(2) and NH(3) from urea (urease route): step 1/1. The sequence is that of Urease subunit beta from Yersinia pseudotuberculosis serotype O:1b (strain IP 31758).